The chain runs to 215 residues: Probable transaldolase (215 aa).

Lysine 83 acts as the Schiff-base intermediate with substrate in catalysis.

It belongs to the transaldolase family. Type 3B subfamily.

The protein localises to the cytoplasm. The catalysed reaction is D-sedoheptulose 7-phosphate + D-glyceraldehyde 3-phosphate = D-erythrose 4-phosphate + beta-D-fructose 6-phosphate. Its pathway is carbohydrate degradation; pentose phosphate pathway; D-glyceraldehyde 3-phosphate and beta-D-fructose 6-phosphate from D-ribose 5-phosphate and D-xylulose 5-phosphate (non-oxidative stage): step 2/3. Its function is as follows. Transaldolase is important for the balance of metabolites in the pentose-phosphate pathway. The polypeptide is Probable transaldolase (Methanococcus maripaludis (strain C6 / ATCC BAA-1332)).